Here is a 188-residue protein sequence, read N- to C-terminus: Large ribosomal subunit protein uL10 (188 aa).

The protein belongs to the universal ribosomal protein uL10 family. As to quaternary structure, part of the ribosomal stalk of the 50S ribosomal subunit. The N-terminus interacts with L11 and the large rRNA to form the base of the stalk. The C-terminus forms an elongated spine to which L12 dimers bind in a sequential fashion forming a multimeric L10(L12)X complex.

Its function is as follows. Forms part of the ribosomal stalk, playing a central role in the interaction of the ribosome with GTP-bound translation factors. In Crocosphaera subtropica (strain ATCC 51142 / BH68) (Cyanothece sp. (strain ATCC 51142)), this protein is Large ribosomal subunit protein uL10.